The following is a 242-amino-acid chain: Cell division protein FtsQ (242 aa).

Residues 1–12 (MWDNAEAMERLT) lie on the Cytoplasmic side of the membrane. The helical transmembrane segment at 13–32 (RWLLVMMAMLLAASGLVWFY) threads the bilayer. Residues 33-242 (NSNHLPVKQV…DGLPEKESEE (210 aa)) lie on the Periplasmic side of the membrane. Residues 37-106 (LPVKQVSLKG…DTVEVVLTER (70 aa)) form the POTRA domain.

Belongs to the FtsQ/DivIB family. FtsQ subfamily. As to quaternary structure, part of a complex composed of FtsB, FtsL and FtsQ.

The protein resides in the cell inner membrane. Essential cell division protein. May link together the upstream cell division proteins, which are predominantly cytoplasmic, with the downstream cell division proteins, which are predominantly periplasmic. May control correct divisome assembly. The sequence is that of Cell division protein FtsQ from Neisseria gonorrhoeae (strain ATCC 700825 / FA 1090).